Reading from the N-terminus, the 429-residue chain is Serine--tRNA ligase (429 aa).

235–237 (TAE) contributes to the L-serine binding site. ATP is bound at residue 266 to 268 (RSE). Position 289 (E289) interacts with L-serine. 353-356 (EISS) serves as a coordination point for ATP. Residue S389 coordinates L-serine.

Belongs to the class-II aminoacyl-tRNA synthetase family. Type-1 seryl-tRNA synthetase subfamily. Homodimer. The tRNA molecule binds across the dimer.

It localises to the cytoplasm. It carries out the reaction tRNA(Ser) + L-serine + ATP = L-seryl-tRNA(Ser) + AMP + diphosphate + H(+). It catalyses the reaction tRNA(Sec) + L-serine + ATP = L-seryl-tRNA(Sec) + AMP + diphosphate + H(+). It functions in the pathway aminoacyl-tRNA biosynthesis; selenocysteinyl-tRNA(Sec) biosynthesis; L-seryl-tRNA(Sec) from L-serine and tRNA(Sec): step 1/1. Catalyzes the attachment of serine to tRNA(Ser). Is also able to aminoacylate tRNA(Sec) with serine, to form the misacylated tRNA L-seryl-tRNA(Sec), which will be further converted into selenocysteinyl-tRNA(Sec). In Histophilus somni (strain 129Pt) (Haemophilus somnus), this protein is Serine--tRNA ligase.